The chain runs to 457 residues: uncharacterized protein (457 aa).

14 consecutive transmembrane segments (helical) span residues 15-35, 54-74, 87-107, 112-132, 144-164, 166-186, 205-225, 229-249, 269-289, 308-328, 334-354, 357-377, 400-420, and 428-448; these read YGAI…GAIA, IWVV…FSFL, GLVV…LQML, VIQG…IRLI, INSF…AAIL, IASW…ALLL, LPSA…LSGF, QSLT…IFFI, LFSL…LAMV, LLLT…GYLI, GLLG…LVLL, SPAD…FGLF, MLGT…ALML, and THVS…VSGL.

The protein belongs to the major facilitator superfamily. TCR/Tet family.

It is found in the cell inner membrane. This is an uncharacterized protein from Escherichia coli (strain K12).